Reading from the N-terminus, the 1473-residue chain is DNA topoisomerase 2 (1473 aa).

The tract at residues 1-20 is disordered; that stretch reads MATKLPLQNSNAANVAKAPA. Low complexity predominate over residues 9-20; the sequence is NSNAANVAKAPA. Residues Asn-91, Asn-120, 148–150, and 161–168 each bind ATP; these read SSN and GRNGYGAK. The tract at residues 345-347 is interaction with DNA; the sequence is NKK. An ATP-binding site is contributed by 378-380; the sequence is QTK. Residues 455 to 569 enclose the Toprim domain; that stretch reads CTLILTEGDS…SLLQVPSFLV (115 aa). Mg(2+) is bound by residues Glu-461, Asp-538, and Asp-540. The Topo IIA-type catalytic domain maps to 704–1163; the sequence is IPSMVDGLKP…TPKSLWLSDL (460 aa). Tyr-794 serves as the catalytic O-(5'-phospho-DNA)-tyrosine intermediate. Positions 980-989 are interaction with DNA; sequence KLTTTIATSN. Disordered stretches follow at residues 1195-1230, 1242-1297, and 1313-1473; these read SGAA…SYSA, KPKA…EVEE, and GSAP…EDDE. 2 stretches are compositionally biased toward basic residues: residues 1200-1216 and 1278-1288; these read KVKR…KTTK and PKGRQGAKKKA. The span at 1351-1360 shows a compositional bias: low complexity; sequence KPAATKAAKP. Composition is skewed to polar residues over residues 1394–1404 and 1417–1427; these read SPFNKKSSSVM and ENVAGNSSSEK. Acidic residues predominate over residues 1453-1473; sequence SESESANDSEFDDIEDDEDDE.

This sequence belongs to the type II topoisomerase family. In terms of assembly, homodimer. Mg(2+) serves as cofactor. It depends on Mn(2+) as a cofactor. Ca(2+) is required as a cofactor.

The enzyme catalyses ATP-dependent breakage, passage and rejoining of double-stranded DNA.. In terms of biological role, control of topological states of DNA by transient breakage and subsequent rejoining of DNA strands. Topoisomerase II makes double-strand breaks. The protein is DNA topoisomerase 2 (TOP2) of Arabidopsis thaliana (Mouse-ear cress).